The primary structure comprises 38 residues: Potassium channel toxin alpha-KTx 3.7 (38 aa).

3 disulfide bridges follow: cysteine 8/cysteine 28, cysteine 14/cysteine 33, and cysteine 18/cysteine 35.

The protein belongs to the short scorpion toxin superfamily. Potassium channel inhibitor family. Alpha-KTx 03 subfamily. In terms of tissue distribution, expressed by the venom gland.

Its subcellular location is the secreted. Its function is as follows. Blocks voltage-gated potassium channels Kv1.1/KCNA1 (IC(50)=0.6 nM), Kv1.2/KCNA2 (IC(50)=5.4 nM), Kv1.3/KCNA3 (IC(50)=0.014 nM) potently, and moderately block intermediate conductance calcium-activated potassium channels KCa3.1/KCNN4 (IC(50)=225 nM). Also shows activity on muscle-type nicotinic acetylcholine receptor (nAChR), since it reversibly and dose-dependently inhibits acetylcholine-induced current through mouse muscle-type nAChR heterologously expressed in Xenopus oocytes (IC(50)=1.6 uM). The sequence is that of Potassium channel toxin alpha-KTx 3.7 from Orthochirus scrobiculosus (Central Asian scorpion).